The primary structure comprises 187 residues: Signal peptidase I U (187 aa).

Residues Met1–Thr16 lie on the Cytoplasmic side of the membrane. Residues Ile17–Tyr37 form a helical membrane-spanning segment. At Lys38–Lys187 the chain is on the extracellular side. Residues Ser46 and Lys88 contribute to the active site.

The protein belongs to the peptidase S26 family.

The protein localises to the cell membrane. It catalyses the reaction Cleavage of hydrophobic, N-terminal signal or leader sequences from secreted and periplasmic proteins.. The protein is Signal peptidase I U (sipU) of Bacillus subtilis (strain 168).